A 248-amino-acid polypeptide reads, in one-letter code: ATP synthase subunit a, chloroplastic (248 aa).

A run of 5 helical transmembrane segments spans residues 38–58 (QVLI…TIAV), 96–116 (VPFI…GALL), 135–155 (INTT…AGLA), 200–220 (LVVA…VMFL), and 221–241 (GLFT…AYIG).

It belongs to the ATPase A chain family. As to quaternary structure, F-type ATPases have 2 components, CF(1) - the catalytic core - and CF(0) - the membrane proton channel. CF(1) has five subunits: alpha(3), beta(3), gamma(1), delta(1), epsilon(1). CF(0) has four main subunits: a, b, b' and c.

Its subcellular location is the plastid. It localises to the chloroplast thylakoid membrane. Its function is as follows. Key component of the proton channel; it plays a direct role in the translocation of protons across the membrane. The protein is ATP synthase subunit a, chloroplastic of Cycas taitungensis (Prince sago).